Consider the following 210-residue polypeptide: Uracil phosphoribosyltransferase (210 aa).

5-phospho-alpha-D-ribose 1-diphosphate-binding positions include R77, R102, and 129–137; that span reads DPMLATGAS. Residues I195 and 200 to 202 each bind uracil; that span reads GDA. Residue D201 participates in 5-phospho-alpha-D-ribose 1-diphosphate binding.

Belongs to the UPRTase family. It depends on Mg(2+) as a cofactor.

It carries out the reaction UMP + diphosphate = 5-phospho-alpha-D-ribose 1-diphosphate + uracil. Its pathway is pyrimidine metabolism; UMP biosynthesis via salvage pathway; UMP from uracil: step 1/1. Its activity is regulated as follows. Allosterically activated by GTP. Its function is as follows. Catalyzes the conversion of uracil and 5-phospho-alpha-D-ribose 1-diphosphate (PRPP) to UMP and diphosphate. In Mycoplasmoides gallisepticum (strain R(low / passage 15 / clone 2)) (Mycoplasma gallisepticum), this protein is Uracil phosphoribosyltransferase.